The sequence spans 237 residues: DNA repair protein RecO (237 aa).

This sequence belongs to the RecO family.

Its function is as follows. Involved in DNA repair and RecF pathway recombination. This Actinobacillus succinogenes (strain ATCC 55618 / DSM 22257 / CCUG 43843 / 130Z) protein is DNA repair protein RecO.